The sequence spans 413 residues: Histidine--tRNA ligase (413 aa).

It belongs to the class-II aminoacyl-tRNA synthetase family. In terms of assembly, homodimer.

The protein resides in the cytoplasm. The catalysed reaction is tRNA(His) + L-histidine + ATP = L-histidyl-tRNA(His) + AMP + diphosphate + H(+). This chain is Histidine--tRNA ligase, found in Ehrlichia chaffeensis (strain ATCC CRL-10679 / Arkansas).